We begin with the raw amino-acid sequence, 301 residues long: Glycine--tRNA ligase alpha subunit (301 aa).

This sequence belongs to the class-II aminoacyl-tRNA synthetase family. Tetramer of two alpha and two beta subunits.

It is found in the cytoplasm. The catalysed reaction is tRNA(Gly) + glycine + ATP = glycyl-tRNA(Gly) + AMP + diphosphate. The protein is Glycine--tRNA ligase alpha subunit of Variovorax paradoxus (strain S110).